Reading from the N-terminus, the 254-residue chain is Ribosomal RNA small subunit methyltransferase J (254 aa).

S-adenosyl-L-methionine-binding positions include 107–108, 123–124, and Asp-177; these read RD and ER.

The protein belongs to the methyltransferase superfamily. RsmJ family.

The protein resides in the cytoplasm. The catalysed reaction is guanosine(1516) in 16S rRNA + S-adenosyl-L-methionine = N(2)-methylguanosine(1516) in 16S rRNA + S-adenosyl-L-homocysteine + H(+). Functionally, specifically methylates the guanosine in position 1516 of 16S rRNA. The protein is Ribosomal RNA small subunit methyltransferase J of Histophilus somni (strain 129Pt) (Haemophilus somnus).